The sequence spans 646 residues: WW domain-containing adapter protein with coiled-coil (646 aa).

Residues 1 to 138 form a disordered region; that stretch reads MVMYARKQQR…YDSADDWSEH (138 aa). Residues 23–37 show a composition bias toward polar residues; the sequence is QPFQALKYSSKSHPS. The span at 38 to 50 shows a compositional bias: basic and acidic residues; sequence SGDHRHEKMRDAA. S53 carries the post-translational modification Phosphoserine. The segment covering 61–75 has biased composition (polar residues); it reads RSNSPENKYSDSTGH. Over residues 103 to 122 the composition is skewed to low complexity; sequence NHSALHSSNSHSSNPSNNPS. The WW domain occupies 129–162; that stretch reads YDSADDWSEHISSSGKKYYYNCRTEVSQWEKPKE. 2 positions are modified to phosphoserine: S131 and S142. 2 stretches are compositionally biased toward basic and acidic residues: residues 158 to 174 and 182 to 191; these read EKPK…KEAN and PKDRDYRREV. 2 disordered regions span residues 158 to 352 and 428 to 541; these read EKPK…PQST and TQAQ…TATV. Residues 211-225 are compositionally biased toward polar residues; that stretch reads DASSLLPQNILSQTS. S225 is modified (phosphoserine). Residues 226-239 are compositionally biased toward basic and acidic residues; that stretch reads RHNDKDYRLPRAET. Over residues 252-267 the composition is skewed to low complexity; the sequence is PVVHPTATPSTVPSSP. A compositionally biased stretch (polar residues) spans 284–300; that stretch reads GASTLSKLPTPTASLPA. The residue at position 293 (T293) is a Phosphothreonine. N6-acetyllysine is present on K302. Over residues 316-331 the composition is skewed to polar residues; sequence SHSCTTPSTSSASGLN. Positions 332–351 are enriched in low complexity; the sequence is PTSAPPTSASAVPVSPVPQS. Over residues 428 to 463 the composition is skewed to polar residues; that stretch reads TQAQPSNQSPMSLTSDASSPRSYVSPRISTPQTNTV. S446 carries the phosphoserine modification. The residue at position 471 (T471) is a Phosphothreonine. Residues 490–503 are compositionally biased toward polar residues; it reads VSHSATQQPVTADK. Residues S511, S523, and S525 each carry the phosphoserine modification. A compositionally biased stretch (low complexity) spans 511–524; sequence SPRSLQRLSSQRSP. Polar residues predominate over residues 528–541; sequence PNHTCSSNASTATV. A coiled-coil region spans residues 617-643; it reads QATLREQRILFLRQQIKELEKLKNQNS.

In terms of assembly, interacts (via coiled coil domain) with RNF20, RNF40 and UBE2A. Interacts (via WW domain) with RNA polymerase II. Interacts with MTOR and other components of the MTOR pathway including RPTOR, RUVBL1, RUVBL2, TTI1 and TTI2. Post-translationally, phosphorylated on tyrosine residues.

It localises to the nucleus speckle. It is found in the nucleus. Functionally, acts as a linker between gene transcription and histone H2B monoubiquitination at 'Lys-120' (H2BK120ub1). Interacts with the RNA polymerase II transcriptional machinery via its WW domain and with RNF20-RNF40 via its coiled coil region, thereby linking and regulating H2BK120ub1 and gene transcription. Regulates the cell-cycle checkpoint activation in response to DNA damage. Positive regulator of amino acid starvation-induced autophagy. Also acts as a negative regulator of basal autophagy. Positively regulates MTOR activity by promoting, in an energy-dependent manner, the assembly of the TTT complex composed of TELO2, TTI1 and TTI2 and the RUVBL complex composed of RUVBL1 and RUVBL2 into the TTT-RUVBL complex. This leads to the dimerization of the mTORC1 complex and its subsequent activation. May negatively regulate the ubiquitin proteasome pathway. The protein is WW domain-containing adapter protein with coiled-coil (Wac) of Mus musculus (Mouse).